The following is a 132-amino-acid chain: Holo-[acyl-carrier-protein] synthase (132 aa).

Residues D8 and E64 each contribute to the Mg(2+) site.

The protein belongs to the P-Pant transferase superfamily. AcpS family. It depends on Mg(2+) as a cofactor.

The protein resides in the cytoplasm. The catalysed reaction is apo-[ACP] + CoA = holo-[ACP] + adenosine 3',5'-bisphosphate + H(+). Its function is as follows. Transfers the 4'-phosphopantetheine moiety from coenzyme A to a Ser of acyl-carrier-protein. This is Holo-[acyl-carrier-protein] synthase from Shewanella sediminis (strain HAW-EB3).